The chain runs to 444 residues: Probable glycolate oxidase iron-sulfur subunit (444 aa).

4Fe-4S ferredoxin-type domains lie at 14–46 (FKER…GFQE) and 69–100 (EDVE…LLEE). [4Fe-4S] cluster contacts are provided by Cys26, Cys29, Cys32, Cys36, Cys78, Cys81, Cys84, and Cys88.

As to quaternary structure, the glycolate oxidase likely consists of several subunits including GlcD and GlcF. [4Fe-4S] cluster is required as a cofactor.

Its subcellular location is the cell membrane. The enzyme catalyses glycolate + A = glyoxylate + AH2. It catalyses the reaction (R)-lactate + A = pyruvate + AH2. Its function is as follows. Component of a complex that catalyzes the oxidation of glycolate to glyoxylate. Is also able to oxidize D-lactate ((R)-lactate). Does not link directly to O(2), and 2,6-dichloroindophenol (DCIP) and phenazine methosulfate (PMS) can act as artificial electron acceptors in vitro, but the physiological molecule that functions as primary electron acceptor during glycolate oxidation is unknown. The protein is Probable glycolate oxidase iron-sulfur subunit (glcF) of Bacillus subtilis (strain 168).